The primary structure comprises 132 residues: Small ribosomal subunit protein uS8c (132 aa).

The protein belongs to the universal ribosomal protein uS8 family. As to quaternary structure, part of the 30S ribosomal subunit.

It localises to the plastid. The protein resides in the chloroplast. In terms of biological role, one of the primary rRNA binding proteins, it binds directly to 16S rRNA central domain where it helps coordinate assembly of the platform of the 30S subunit. The protein is Small ribosomal subunit protein uS8c (rps8) of Adiantum capillus-veneris (Maidenhair fern).